Consider the following 533-residue polypeptide: NEDD8-activating enzyme E1 regulatory subunit (533 aa).

The interval 330–343 (DMIADSDKFIKLQN) is interaction with uba3.

Belongs to the ubiquitin-activating E1 family. ULA1 subfamily. Heterodimer of uba3 and nae1. The complex binds nedd8 and ube2m.

Its pathway is protein modification; protein neddylation. Regulatory subunit of the dimeric uba3-nae1 E1 enzyme. E1 activates nedd8 by first adenylating its C-terminal glycine residue with ATP, thereafter linking this residue to the side chain of the catalytic cysteine, yielding a nedd8-uba3 thioester and free AMP. E1 finally transfers nedd8 to the catalytic cysteine of ube2m. The covalent attachment of nedd8 to target proteins is known as 'neddylation' and the process is involved in the regulation of cell growth, viability and development. The chain is NEDD8-activating enzyme E1 regulatory subunit (nae1) from Danio rerio (Zebrafish).